The sequence spans 357 residues: Membrane-bound lytic murein transglycosylase C (357 aa).

A signal peptide spans Met1–Ala15. Cys16 carries N-palmitoyl cysteine lipidation. Cys16 carries S-diacylglycerol cysteine lipidation.

This sequence belongs to the transglycosylase Slt family.

It localises to the cell outer membrane. The enzyme catalyses Exolytic cleavage of the (1-&gt;4)-beta-glycosidic linkage between N-acetylmuramic acid (MurNAc) and N-acetylglucosamine (GlcNAc) residues in peptidoglycan, from either the reducing or the non-reducing ends of the peptidoglycan chains, with concomitant formation of a 1,6-anhydrobond in the MurNAc residue.. Functionally, murein-degrading enzyme. May play a role in recycling of muropeptides during cell elongation and/or cell division. This is Membrane-bound lytic murein transglycosylase C from Haemophilus influenzae (strain ATCC 51907 / DSM 11121 / KW20 / Rd).